Here is a 41-residue protein sequence, read N- to C-terminus: Maticotoxin A (41 aa).

Disulfide bonds link Cys-3-Cys-22 and Cys-15-Cys-39.

It belongs to the three-finger toxin family. Short-chain subfamily. In terms of tissue distribution, expressed by the venom gland.

It is found in the secreted. The chain is Maticotoxin A from Calliophis bivirgatus (Blue Malaysian coral snake).